The chain runs to 717 residues: Probable metal-nicotianamine transporter YSL12 (717 aa).

Positions 1–56 (MASHANASGGGGDEEMVEASTLRHRHGAGKDANGVGTERQLAAAAAEGEEEGPSSV) are disordered. A run of 14 helical transmembrane segments spans residues 76-96 (AFVV…KLNL), 99-119 (GIIP…VRLW), 144-164 (CVVA…LFGM), 186-206 (IGWM…ALVP), 248-268 (LGKF…YTAG), 306-326 (IVNV…WPLI), 351-371 (VFIS…KVLI), 422-442 (VAFG…PQIF), 450-470 (ILVA…GAGL), 482-502 (LAIF…LVGL), 536-556 (FVSQ…VFWL), 593-613 (LPKH…AINL), 636-656 (FYIG…LFVW), and 671-691 (VASG…ILAL).

This sequence belongs to the YSL (TC 2.A.67.2) family. Expressed in root cortex and stele.

The protein resides in the membrane. Its function is as follows. May be involved in the transport of nicotianamine-chelated metals. This Oryza sativa subsp. japonica (Rice) protein is Probable metal-nicotianamine transporter YSL12 (YSL12).